The primary structure comprises 108 residues: Mitochondrial import inner membrane translocase subunit tim-13 (108 aa).

The Twin CX3C motif motif lies at 45–68; the sequence is CTNKCITAPGSSLASGEKQCLQRC. 2 cysteine pairs are disulfide-bonded: cysteine 45/cysteine 68 and cysteine 49/cysteine 64. Residues 89 to 108 form a disordered region; that stretch reads EEMASSGGMGGGFGQGPSFS. Positions 95 to 108 are enriched in gly residues; that stretch reads GGMGGGFGQGPSFS.

Belongs to the small Tim family. Heterohexamer; composed of 3 copies of tim-8/ddp-1 and 3 copies of tin-13/tim-13, named soluble 70 kDa complex. Associates with the TIM22 complex, whose core is composed of tim-22.

The protein resides in the mitochondrion inner membrane. In terms of biological role, mitochondrial intermembrane chaperone that participates in the import and insertion of some multi-pass transmembrane proteins into the mitochondrial inner membrane. Also required for the transfer of beta-barrel precursors from the TOM complex to the sorting and assembly machinery (SAM complex) of the outer membrane. Acts as a chaperone-like protein that protects the hydrophobic precursors from aggregation and guide them through the mitochondrial intermembrane space. The tim-8-tim-13 complex mediates the import of some proteins while the predominant tim-9/tin-9.1-tim-10/tin-10 70 kDa complex mediates the import of much more proteins. In Caenorhabditis elegans, this protein is Mitochondrial import inner membrane translocase subunit tim-13 (tin-13).